Consider the following 299-residue polypeptide: SET domain-containing protein 9 (299 aa).

An SET domain is found at 122 to 295 (FSVAQATSSL…QGEELFSNYY (174 aa)). Tyrosine 294 contributes to the S-adenosyl-L-methionine binding site.

The protein belongs to the class V-like SAM-binding methyltransferase superfamily.

This is SET domain-containing protein 9 (SETD9) from Homo sapiens (Human).